The sequence spans 298 residues: Bifunctional protein FolD (298 aa).

NADP(+)-binding positions include glycine 165–serine 167, serine 190, and isoleucine 231.

This sequence belongs to the tetrahydrofolate dehydrogenase/cyclohydrolase family. As to quaternary structure, homodimer.

The enzyme catalyses (6R)-5,10-methylene-5,6,7,8-tetrahydrofolate + NADP(+) = (6R)-5,10-methenyltetrahydrofolate + NADPH. It carries out the reaction (6R)-5,10-methenyltetrahydrofolate + H2O = (6R)-10-formyltetrahydrofolate + H(+). The protein operates within one-carbon metabolism; tetrahydrofolate interconversion. Its function is as follows. Catalyzes the oxidation of 5,10-methylenetetrahydrofolate to 5,10-methenyltetrahydrofolate and then the hydrolysis of 5,10-methenyltetrahydrofolate to 10-formyltetrahydrofolate. This Prochlorococcus marinus (strain MIT 9301) protein is Bifunctional protein FolD.